Consider the following 288-residue polypeptide: 4-hydroxybenzoate octaprenyltransferase (288 aa).

8 helical membrane passes run 23-43 (IGSL…GKGI), 46-66 (TKIL…GCVV), 98-118 (ILFV…NSMT), 141-161 (LPQV…FAAV), 165-185 (LPLV…AYDT), 213-233 (LIIG…GWLM), 234-254 (NLGG…VHQQ), and 268-288 (AFLN…ISYL).

It belongs to the UbiA prenyltransferase family. Mg(2+) serves as cofactor.

It is found in the cell inner membrane. It carries out the reaction all-trans-octaprenyl diphosphate + 4-hydroxybenzoate = 4-hydroxy-3-(all-trans-octaprenyl)benzoate + diphosphate. The protein operates within cofactor biosynthesis; ubiquinone biosynthesis. In terms of biological role, catalyzes the prenylation of para-hydroxybenzoate (PHB) with an all-trans polyprenyl group. Mediates the second step in the final reaction sequence of ubiquinone-8 (UQ-8) biosynthesis, which is the condensation of the polyisoprenoid side chain with PHB, generating the first membrane-bound Q intermediate 3-octaprenyl-4-hydroxybenzoate. In Yersinia enterocolitica serotype O:8 / biotype 1B (strain NCTC 13174 / 8081), this protein is 4-hydroxybenzoate octaprenyltransferase.